The chain runs to 64 residues: Disintegrin VB7B (64 aa).

Residues 1-64 enclose the Disintegrin domain; it reads ELLQNSGNPC…TGISSDCPRN (64 aa). 4 disulfides stabilise this stretch: Cys10–Cys33, Cys24–Cys30, Cys29–Cys54, and Cys42–Cys61. Positions 46–48 match the Cell attachment site; atypical (KGD) motif; sequence KGD.

This sequence belongs to the venom metalloproteinase (M12B) family. P-II subfamily. P-IIe sub-subfamily. In terms of assembly, heterodimer with VB7A; disulfide-linked. In terms of tissue distribution, expressed by the venom gland.

The protein localises to the secreted. In terms of biological role, poor inhibitor of platelet aggregation. The disintegrin inhibits the adhesion of cells expressing the RGD-dependent integrin alpha-5/beta-1 (ITGA5/ITGB1) to immobilized fibronectin. Inhibition on alpha-IIb/beta-3 (ITGA2B/ITGB3) is low. This Vipera berus berus (Common viper) protein is Disintegrin VB7B.